The primary structure comprises 202 residues: P25 protein (202 aa).

A Flavodoxin-like domain is found at 7–195 (VAIVIYSTYG…EIARIQGETF (189 aa)). A Phosphoserine modification is found at Ser181.

The protein belongs to the WrbA family. Homodimer.

Its function is as follows. Unknown. Target of pap1 transcription factor. Confers brefeldin A resistance in S.pombe. In Schizosaccharomyces pombe (strain 972 / ATCC 24843) (Fission yeast), this protein is P25 protein (obr1).